Reading from the N-terminus, the 384-residue chain is tRNA 2-selenouridine synthase (384 aa).

A Rhodanese domain is found at 15–138; that stretch reads FVAGKPLIDL…MRQYLIGVIE (124 aa). Cys-98 functions as the S-selanylcysteine intermediate in the catalytic mechanism.

It belongs to the SelU family. In terms of assembly, monomer.

It catalyses the reaction 5-methylaminomethyl-2-thiouridine(34) in tRNA + selenophosphate + (2E)-geranyl diphosphate + H2O + H(+) = 5-methylaminomethyl-2-selenouridine(34) in tRNA + (2E)-thiogeraniol + phosphate + diphosphate. The enzyme catalyses 5-methylaminomethyl-2-thiouridine(34) in tRNA + (2E)-geranyl diphosphate = 5-methylaminomethyl-S-(2E)-geranyl-thiouridine(34) in tRNA + diphosphate. The catalysed reaction is 5-methylaminomethyl-S-(2E)-geranyl-thiouridine(34) in tRNA + selenophosphate + H(+) = 5-methylaminomethyl-2-(Se-phospho)selenouridine(34) in tRNA + (2E)-thiogeraniol. It carries out the reaction 5-methylaminomethyl-2-(Se-phospho)selenouridine(34) in tRNA + H2O = 5-methylaminomethyl-2-selenouridine(34) in tRNA + phosphate. Functionally, involved in the post-transcriptional modification of the uridine at the wobble position (U34) of tRNA(Lys), tRNA(Glu) and tRNA(Gln). Catalyzes the conversion of 2-thiouridine (S2U-RNA) to 2-selenouridine (Se2U-RNA). Acts in a two-step process involving geranylation of 2-thiouridine (S2U) to S-geranyl-2-thiouridine (geS2U) and subsequent selenation of the latter derivative to 2-selenouridine (Se2U) in the tRNA chain. The polypeptide is tRNA 2-selenouridine synthase (Shewanella sp. (strain MR-4)).